Reading from the N-terminus, the 404-residue chain is Argininosuccinate synthase (404 aa).

Residue 9 to 17 (AYSGGLDTS) participates in ATP binding. Tyr86 contacts L-citrulline. Gly116 is a binding site for ATP. L-aspartate contacts are provided by Thr118, Asn122, and Asp123. Asn122 contributes to the L-citrulline binding site. Residues Arg126, Ser174, Ser183, Glu259, and Tyr271 each contribute to the L-citrulline site.

It belongs to the argininosuccinate synthase family. Type 1 subfamily. As to quaternary structure, homotetramer.

The protein localises to the cytoplasm. The catalysed reaction is L-citrulline + L-aspartate + ATP = 2-(N(omega)-L-arginino)succinate + AMP + diphosphate + H(+). It functions in the pathway amino-acid biosynthesis; L-arginine biosynthesis; L-arginine from L-ornithine and carbamoyl phosphate: step 2/3. This Listeria welshimeri serovar 6b (strain ATCC 35897 / DSM 20650 / CCUG 15529 / CIP 8149 / NCTC 11857 / SLCC 5334 / V8) protein is Argininosuccinate synthase.